A 232-amino-acid polypeptide reads, in one-letter code: Protein FAM246B (232 aa).

A compositionally biased stretch (basic and acidic residues) spans 19 to 31 (EVLRRVTGRRRDP). 4 disordered regions span residues 19-47 (EVLR…RAPG), 80-101 (AAGA…VCGE), 151-179 (ALLP…GPTL), and 191-232 (AASR…GGGD). Residues 211–220 (APARKNHKKM) are compositionally biased toward basic residues.

It belongs to the FAM246 family.

This chain is Protein FAM246B, found in Homo sapiens (Human).